Here is a 492-residue protein sequence, read N- to C-terminus: MDLSKYRPSSAYDSPFLTTNAGGPVYNNVSSLTVGPRGPVLLEDYHLIEKLATFVRERIPERVVHARGASAKGFFEVTHDISHLTCADFLRAPGVQTPVICRFSTVVHERGSPESIRDIRGFAVKFYTREGNFDLVGNNVPVFFNRDAKSFPDTIRALKPNPKSHIQENWRILDFFSFLPESLHTFAFFYDDVCLPTDYRHMEGFGVHAYQLINKAGKAHYVKFHWKPTCGVKSMTEEEAIRVGGTNHSHATKDLYDSIAAGNYPEWKLFIQIMNPEDVDKFDFDPLDVTKTWPEDILPLMPVGRLVLNRNIDNFFAENEQLAFNPGHIVPGVYYSEDKLLQTRIFAYADTQRHRIGPNYMQLPVNAPKCAHHNNHRDGAMNFMHRDEEVDYLPSRFDPCRPAEQYPIPSCVLTGRREKCVIPKENNFKQAGERYRSWAPDRQDRYINKWVESLSDPRATHEIRSIWISYLSQADKSCGQKVASRLTVKPTM.

Residues H65 and N138 contribute to the active site. Position 348 (Y348) interacts with heme.

This sequence belongs to the catalase family. In terms of assembly, homotetramer. Requires heme as cofactor. In stems, leaves, roots and developing fruits.

The protein localises to the cytoplasm. The protein resides in the cytosol. Its subcellular location is the peroxisome matrix. It carries out the reaction 2 H2O2 = O2 + 2 H2O. In terms of biological role, catalyzes the degradation of hydrogen peroxide (H(2)O(2)) generated by peroxisomal oxidases to water and oxygen, thereby protecting cells from the toxic effects of hydrogen peroxide. This is Catalase (CAT) from Capsicum annuum (Capsicum pepper).